The sequence spans 156 residues: Methylated-DNA--protein-cysteine methyltransferase (156 aa).

Catalysis depends on Cys-120, which acts as the Nucleophile; methyl group acceptor.

Belongs to the MGMT family.

The protein resides in the cytoplasm. The enzyme catalyses a 6-O-methyl-2'-deoxyguanosine in DNA + L-cysteinyl-[protein] = S-methyl-L-cysteinyl-[protein] + a 2'-deoxyguanosine in DNA. It catalyses the reaction a 4-O-methyl-thymidine in DNA + L-cysteinyl-[protein] = a thymidine in DNA + S-methyl-L-cysteinyl-[protein]. Functionally, involved in the cellular defense against the biological effects of O6-methylguanine (O6-MeG) and O4-methylthymine (O4-MeT) in DNA. Repairs the methylated nucleobase in DNA by stoichiometrically transferring the methyl group to a cysteine residue in the enzyme. This is a suicide reaction: the enzyme is irreversibly inactivated. This chain is Methylated-DNA--protein-cysteine methyltransferase, found in Metallosphaera sedula (strain ATCC 51363 / DSM 5348 / JCM 9185 / NBRC 15509 / TH2).